Here is a 784-residue protein sequence, read N- to C-terminus: Endonuclease MutS2 (784 aa).

Position 335–342 (335–342 (GPNTGGKT)) interacts with ATP. The Smr domain maps to 709 to 784 (LDLRGERYED…GTGVTIVELK (76 aa)).

It belongs to the DNA mismatch repair MutS family. MutS2 subfamily. As to quaternary structure, homodimer. Binds to stalled ribosomes, contacting rRNA.

Endonuclease that is involved in the suppression of homologous recombination and thus may have a key role in the control of bacterial genetic diversity. Its function is as follows. Acts as a ribosome collision sensor, splitting the ribosome into its 2 subunits. Detects stalled/collided 70S ribosomes which it binds and splits by an ATP-hydrolysis driven conformational change. Acts upstream of the ribosome quality control system (RQC), a ribosome-associated complex that mediates the extraction of incompletely synthesized nascent chains from stalled ribosomes and their subsequent degradation. Probably generates substrates for RQC. This is Endonuclease MutS2 from Geobacillus kaustophilus (strain HTA426).